The sequence spans 180 residues: LDLR chaperone boca (180 aa).

The signal sequence occupies residues 1–18 (MQTRLVLLLLALTPLVLA). The span at 48–61 (QWEEDEEPLEDDEL) shows a compositional bias: acidic residues. The segment at 48 to 78 (QWEEDEEPLEDDELPEHLRPQPKLDLSNLDS) is disordered. The structured core stretch occupies residues 93–166 (TLMTFVSVTG…QERCKGVTIE (74 aa)). A Prevents secretion from ER motif is present at residues 177-180 (KDEL).

The protein belongs to the MESD family. As to quaternary structure, monomer. Interacts with Arrow and Yolkless.

It localises to the endoplasmic reticulum. In terms of biological role, chaperone specifically assisting the folding of beta-propeller/EGF modules within the family of low-density lipoprotein receptors (LDLRs). Acts as a modulator of the Wg pathway, since some LDLRs are coreceptors for the canonical Wnt pathway. The polypeptide is LDLR chaperone boca (boca) (Drosophila melanogaster (Fruit fly)).